Here is a 339-residue protein sequence, read N- to C-terminus: Ketol-acid reductoisomerase (NADP(+)) (339 aa).

The KARI N-terminal Rossmann domain maps to 1-182; it reads MRVYYDRDAD…GGGRAGIIET (182 aa). NADP(+)-binding positions include 24-27, Arg48, Ser51, Thr53, and 83-86; these read YGSQ and DELQ. His108 is an active-site residue. Residue Gly134 participates in NADP(+) binding. The KARI C-terminal knotted domain maps to 183–328; sequence SFKEECETDL…AKLREMMPWI (146 aa). Residues Asp191, Glu195, Glu227, and Glu231 each contribute to the Mg(2+) site. Ser252 is a substrate binding site.

This sequence belongs to the ketol-acid reductoisomerase family. Mg(2+) is required as a cofactor.

It catalyses the reaction (2R)-2,3-dihydroxy-3-methylbutanoate + NADP(+) = (2S)-2-acetolactate + NADPH + H(+). It carries out the reaction (2R,3R)-2,3-dihydroxy-3-methylpentanoate + NADP(+) = (S)-2-ethyl-2-hydroxy-3-oxobutanoate + NADPH + H(+). It participates in amino-acid biosynthesis; L-isoleucine biosynthesis; L-isoleucine from 2-oxobutanoate: step 2/4. It functions in the pathway amino-acid biosynthesis; L-valine biosynthesis; L-valine from pyruvate: step 2/4. Functionally, involved in the biosynthesis of branched-chain amino acids (BCAA). Catalyzes an alkyl-migration followed by a ketol-acid reduction of (S)-2-acetolactate (S2AL) to yield (R)-2,3-dihydroxy-isovalerate. In the isomerase reaction, S2AL is rearranged via a Mg-dependent methyl migration to produce 3-hydroxy-3-methyl-2-ketobutyrate (HMKB). In the reductase reaction, this 2-ketoacid undergoes a metal-dependent reduction by NADPH to yield (R)-2,3-dihydroxy-isovalerate. The polypeptide is Ketol-acid reductoisomerase (NADP(+)) (Rhodopseudomonas palustris (strain BisB5)).